Reading from the N-terminus, the 228-residue chain is Abnormal cell migration protein 18 (228 aa).

The signal sequence occupies residues 1–19 (MTFTLRLLVLCTVYSYVIS). 2 N-linked (GlcNAc...) asparagine glycosylation sites follow: Asn-135 and Asn-159.

In terms of tissue distribution, expressed in body wall muscle.

It localises to the secreted. The protein resides in the extracellular space. It is found in the extracellular matrix. Its subcellular location is the basement membrane. Its function is as follows. Required for the directional control of distal tip cell migration during gonadogenesis, probably by recruiting fibulin fbl-1 to the gonad basement membrane. The polypeptide is Abnormal cell migration protein 18 (Caenorhabditis elegans).